A 769-amino-acid chain; its full sequence is Sensor protein DivL (769 aa).

Residues 6-26 traverse the membrane as a helical segment; it reads LILAAAAGAVCLAISVALWSH. A Histidine kinase domain is found at 547 to 758; sequence NVSYELRTPL…TFTCHLPETQ (212 aa). Phosphotyrosine; by autocatalysis is present on Tyr-550.

In terms of processing, autophosphorylated.

It is found in the cell membrane. The enzyme catalyses ATP + protein L-histidine = ADP + protein N-phospho-L-histidine.. Functionally, required for cell division and growth. It catalyzes the phosphorylation of CtrA and activates transcription in vitro of the cell cycle-regulated fliF promoter. This chain is Sensor protein DivL (divL), found in Caulobacter vibrioides (strain ATCC 19089 / CIP 103742 / CB 15) (Caulobacter crescentus).